Here is a 557-residue protein sequence, read N- to C-terminus: Urocanate hydratase (557 aa).

NAD(+) is bound by residues 53-54, Q131, 177-179, E197, R202, 243-244, 264-268, 274-275, and Y323; these read GG, GMG, NA, QTSAH, and YL. Residue C411 is part of the active site. Residues 445-464 form a disordered region; sequence LDSGSVSSPNRETESMRDGS. The span at 455–464 shows a compositional bias: basic and acidic residues; that stretch reads RETESMRDGS. Residue G493 participates in NAD(+) binding.

The protein belongs to the urocanase family. The cofactor is NAD(+).

It localises to the cytoplasm. The catalysed reaction is 4-imidazolone-5-propanoate = trans-urocanate + H2O. It participates in amino-acid degradation; L-histidine degradation into L-glutamate; N-formimidoyl-L-glutamate from L-histidine: step 2/3. In terms of biological role, catalyzes the conversion of urocanate to 4-imidazolone-5-propionate. The sequence is that of Urocanate hydratase from Pseudomonas putida (strain W619).